The sequence spans 308 residues: Elongation factor Ts (308 aa).

An involved in Mg(2+) ion dislocation from EF-Tu region spans residues Thr-80–Val-83.

Belongs to the EF-Ts family.

The protein localises to the cytoplasm. Its function is as follows. Associates with the EF-Tu.GDP complex and induces the exchange of GDP to GTP. It remains bound to the aminoacyl-tRNA.EF-Tu.GTP complex up to the GTP hydrolysis stage on the ribosome. The protein is Elongation factor Ts of Rhodopseudomonas palustris (strain BisB18).